The chain runs to 249 residues: Ribonuclease PH (249 aa).

Phosphate is bound by residues Arg86 and 124 to 126 (GTR).

This sequence belongs to the RNase PH family. As to quaternary structure, homohexameric ring arranged as a trimer of dimers.

The catalysed reaction is tRNA(n+1) + phosphate = tRNA(n) + a ribonucleoside 5'-diphosphate. Functionally, phosphorolytic 3'-5' exoribonuclease that plays an important role in tRNA 3'-end maturation. Removes nucleotide residues following the 3'-CCA terminus of tRNAs; can also add nucleotides to the ends of RNA molecules by using nucleoside diphosphates as substrates, but this may not be physiologically important. Probably plays a role in initiation of 16S rRNA degradation (leading to ribosome degradation) during starvation. The sequence is that of Ribonuclease PH from Clostridium botulinum (strain Alaska E43 / Type E3).